Here is a 430-residue protein sequence, read N- to C-terminus: Histidinol dehydrogenase (430 aa).

Tyr131, Gln192, and Asn215 together coordinate NAD(+). Ser238, Gln260, and His263 together coordinate substrate. Gln260 and His263 together coordinate Zn(2+). Residues Glu328 and His329 each act as proton acceptor in the active site. Substrate-binding residues include His329, Asp362, Glu416, and His421. Residue Asp362 participates in Zn(2+) binding. His421 is a Zn(2+) binding site.

This sequence belongs to the histidinol dehydrogenase family. The cofactor is Zn(2+).

The enzyme catalyses L-histidinol + 2 NAD(+) + H2O = L-histidine + 2 NADH + 3 H(+). It participates in amino-acid biosynthesis; L-histidine biosynthesis; L-histidine from 5-phospho-alpha-D-ribose 1-diphosphate: step 9/9. Catalyzes the sequential NAD-dependent oxidations of L-histidinol to L-histidinaldehyde and then to L-histidine. The chain is Histidinol dehydrogenase from Acinetobacter baylyi (strain ATCC 33305 / BD413 / ADP1).